A 183-amino-acid chain; its full sequence is Ribosome maturation factor RimM (183 aa).

Positions E104–F183 constitute a PRC barrel domain.

It belongs to the RimM family. Binds ribosomal protein uS19.

Its subcellular location is the cytoplasm. In terms of biological role, an accessory protein needed during the final step in the assembly of 30S ribosomal subunit, possibly for assembly of the head region. Essential for efficient processing of 16S rRNA. May be needed both before and after RbfA during the maturation of 16S rRNA. It has affinity for free ribosomal 30S subunits but not for 70S ribosomes. The polypeptide is Ribosome maturation factor RimM (Cronobacter sakazakii (strain ATCC BAA-894) (Enterobacter sakazakii)).